The primary structure comprises 317 residues: Trem-like transcript 1 protein (317 aa).

Positions 1 to 20 are cleaved as a signal peptide; that stretch reads MDCYLLLLLLLLGLAGQGSA. An Ig-like V-type domain is found at 21 to 122; it reads DSHPEVLQAP…PQTLHRVSLL (102 aa). Topologically, residues 21–175 are extracellular; that stretch reads DSHPEVLQAP…EFRRRENSIP (155 aa). 2 cysteine pairs are disulfide-bonded: Cys-39–Cys-105 and Cys-53–Cys-60. A disordered region spans residues 147–166; sequence TGSLLEDPSLDPSASAGPHE. The chain crosses the membrane as a helical span at residues 176–196; sequence LIWGAVLLLALVVVAVVIFAV. Residues 197-317 lie on the Cytoplasmic side of the membrane; it reads MARKKGNRLV…PPNSQTPPSK (121 aa). Cys-208 carries the S-palmitoyl cysteine lipid modification. The interval 212–278 is disordered; it reads QSTGVPGMDP…SQPPLPPKVL (67 aa). The span at 261–275 shows a compositional bias: pro residues; that stretch reads SSEPPAPPSQPPLPP. Ser-283 is subject to Phosphoserine. The ITIM motif lies at 284–289; the sequence is VTYATV. The disordered stretch occupies residues 295–317; the sequence is DKGKIASCEPVQDPPNSQTPPSK. The span at 308 to 317 shows a compositional bias: polar residues; sequence PPNSQTPPSK.

In terms of assembly, when phosphorylated, interacts with PTPN11. When phosphorylated, interacts with PTPN6. In terms of processing, phosphorylated on tyrosine residues. Highly expressed in bone marrow leukocytes, splenic megakaryocytes and platelets. Detected in brain, liver and in peritoneal monocytes.

It localises to the cell membrane. The protein resides in the cytoplasm. In terms of biological role, cell surface receptor that may play a role in the innate and adaptive immune response. This is Trem-like transcript 1 protein (Treml1) from Mus musculus (Mouse).